A 377-amino-acid polypeptide reads, in one-letter code: WAT1-related protein At5g13670 (377 aa).

A run of 10 helical transmembrane segments spans residues 9–29 (FIAI…AKLA), 38–58 (VLVA…ALIL), 64–84 (PKLT…EPVV), 99–119 (TFTS…ACVF), 136–156 (VGTM…GNVI), 187–207 (IMLV…AKIL), 214–234 (LSLT…MGLI), 251–271 (LLAS…IGWA), 279–299 (FVSA…TFVF), and 303–323 (VYVG…LVLW). 2 consecutive EamA domains span residues 18–149 (LYAL…MLMT) and 194–322 (FSWS…YLVL).

Belongs to the drug/metabolite transporter (DMT) superfamily. Plant drug/metabolite exporter (P-DME) (TC 2.A.7.4) family.

It is found in the membrane. In Arabidopsis thaliana (Mouse-ear cress), this protein is WAT1-related protein At5g13670.